The primary structure comprises 237 residues: Large ribosomal subunit protein uL1 (237 aa).

The protein belongs to the universal ribosomal protein uL1 family. Part of the 50S ribosomal subunit.

Its function is as follows. Binds directly to 23S rRNA. The L1 stalk is quite mobile in the ribosome, and is involved in E site tRNA release. Functionally, protein L1 is also a translational repressor protein, it controls the translation of the L11 operon by binding to its mRNA. In Corynebacterium kroppenstedtii (strain DSM 44385 / JCM 11950 / CIP 105744 / CCUG 35717), this protein is Large ribosomal subunit protein uL1.